Reading from the N-terminus, the 184-residue chain is Large ribosomal subunit protein uL6 (184 aa).

This sequence belongs to the universal ribosomal protein uL6 family. Part of the 50S ribosomal subunit.

Functionally, this protein binds to the 23S rRNA, and is important in its secondary structure. It is located near the subunit interface in the base of the L7/L12 stalk, and near the tRNA binding site of the peptidyltransferase center. In Amoebophilus asiaticus (strain 5a2), this protein is Large ribosomal subunit protein uL6.